The sequence spans 856 residues: DNA mismatch repair protein MutS (856 aa).

618 to 625 (GPNMGGKS) contributes to the ATP binding site.

It belongs to the DNA mismatch repair MutS family.

In terms of biological role, this protein is involved in the repair of mismatches in DNA. It is possible that it carries out the mismatch recognition step. This protein has a weak ATPase activity. In Shewanella baltica (strain OS223), this protein is DNA mismatch repair protein MutS.